Reading from the N-terminus, the 407-residue chain is Substance-P receptor (407 aa).

Residues 1 to 31 (MDNVLPVDSDLSPNISTNTSEPNQFVQPAWQ) are Extracellular-facing. Asn14 and Asn18 each carry an N-linked (GlcNAc...) asparagine glycan. A helical transmembrane segment spans residues 32 to 54 (IVLWAAAYTVIVVTSVVGNVVVM). Topologically, residues 55-64 (WIILAHKRMR) are cytoplasmic. A helical membrane pass occupies residues 65 to 86 (TVTNYFLVNLAFAEASMAAFNT). At 87–106 (VVNFTYAVHNEWYYGLFYCK) the chain is on the extracellular side. Cysteines 105 and 180 form a disulfide. The helical transmembrane segment at 107 to 128 (FHNFFPIAAVFASIYSMTAVAF) threads the bilayer. Residues 129–148 (DRYMAIIHPLQPRLSATATK) lie on the Cytoplasmic side of the membrane. Residues 149 to 169 (VVICVIWVLALLLAFPQGYYS) form a helical membrane-spanning segment. Residues 170 to 194 (TTETMPSRVVCMIEWPEHPNKIYEK) lie on the Extracellular side of the membrane. Residues 195–219 (VYHICVTVLIYFLPLLVIGYAYTVV) traverse the membrane as a helical segment. His197 is a binding site for CP-96345. The Cytoplasmic segment spans residues 220–248 (GITLWASEIPGDSSDRYHEQVSAKRKVVK). The chain crosses the membrane as a helical span at residues 249 to 270 (MMIVVVCTFAICWLPFHIFFLL). The Extracellular portion of the chain corresponds to 271–283 (PYINPDLYLKKFI). The chain crosses the membrane as a helical span at residues 284 to 308 (QQVYLAIMWLAMSSTMYNPIIYCCL). The Cytoplasmic portion of the chain corresponds to 309 to 407 (NDRFRLGFKH…SFSFSSNVLS (99 aa)). Cys322 carries S-palmitoyl cysteine lipidation. A disordered region spans residues 364 to 407 (AHEEEPEDGPKATPSSLDLTSNCSSRSDSKTMTESFSFSSNVLS). A compositionally biased stretch (polar residues) spans 376–407 (TPSSLDLTSNCSSRSDSKTMTESFSFSSNVLS).

The protein belongs to the G-protein coupled receptor 1 family. Interacts with ARRB1.

The protein resides in the cell membrane. In terms of biological role, this is a receptor for the tachykinin neuropeptide substance P. It is probably associated with G proteins that activate a phosphatidylinositol-calcium second messenger system. The rank order of affinity of this receptor to tachykinins is: substance P &gt; substance K &gt; neuromedin-K. The chain is Substance-P receptor (TACR1) from Homo sapiens (Human).